The primary structure comprises 447 residues: Neuronal acetylcholine receptor subunit alpha-10 (447 aa).

The N-terminal stretch at 1-24 (MGTRSHYLDLGFLLLLFLPAECLG) is a signal peptide. At 25 to 237 (AEGRLAHKLF…FTLLLRRRAA (213 aa)) the chain is on the extracellular side. Residues asparagine 40 and asparagine 56 are each glycosylated (N-linked (GlcNAc...) asparagine). 2 disulfide bridges follow: cysteine 154–cysteine 168 and cysteine 218–cysteine 219. 3 helical membrane passes run 238 to 258 (AYVCNLLLPCVFISLLAPLAF), 268 to 288 (VSLGVTVLLALTVFQLILAES), and 302 to 322 (YMATMTMVTFSTALTILIMNL). At 323–425 (HYCGPNAHPV…WKRLARVMDR (103 aa)) the chain is on the cytoplasmic side. A helical transmembrane segment spans residues 426–446 (FFLGIFFCMALVMSLIVLVQA).

It belongs to the ligand-gated ion channel (TC 1.A.9) family. Acetylcholine receptor (TC 1.A.9.1) subfamily. Alpha-10/CHRNA10 sub-subfamily. Forms homo- or heterooligomeric channels in conjunction with CHRNA10. The native outer hair cell receptor may be composed of CHRNA9:CHRNA10 heterooligomers. Found in the stoichiometric form (CHRNA9)2:(CHRNA10)3. Expressed in the outer hair cells of the cochlea and the neurons of dorsal root ganglia.

The protein resides in the synaptic cell membrane. Its subcellular location is the cell membrane. The enzyme catalyses Ca(2+)(in) = Ca(2+)(out). The catalysed reaction is Mg(2+)(in) = Mg(2+)(out). It carries out the reaction K(+)(in) = K(+)(out). It catalyses the reaction Na(+)(in) = Na(+)(out). With respect to regulation, activated by a myriad of ligands such as acetylcholine. AChR activity is inhibited by the antagonist alpha-conotoxins RgIA and GeXXA, small disulfide-constrained peptides from cone snails. Functionally, component of neuronal acetylcholine receptors (nAChRs) that function as pentameric, ligand-gated cation channels with high calcium permeability among other activities. nAChRs are excitatory neurotrasnmitter receptors formed by a collection of nAChR subunits known to mediate synaptic transmission in the nervous system and the neuromuscular junction. Each nAchR subunit confers differential attributes to channel properties, including activation, deactivation and desensitization kinetics, pH sensitivity, cation permeability, and binding to allosteric modulators. Forms heteropentamers with CHRNA9. Expressed in the inner ear, in sympathetic neurons and in other non-neuronal cells, such as skin keratinocytes and lymphocytes. nAChR formed by CHRNA9:CHRNA10 mediate central nervous system control of auditory and vestibular sensory processing. The channel is permeable to a range of divalent cations including calcium, the influx of which may activate a potassium current which hyperpolarizes the cell membrane. In the ear, mediates synaptic transmission between efferent olivocochlear fibers and hair cells of the cochlea, this may lead to a reduction in basilar membrane motion, altering the activity of auditory nerve fibers and reducing the range of dynamic hearing. This may protect against acoustic trauma. May also regulate keratinocyte adhesion. In Rattus norvegicus (Rat), this protein is Neuronal acetylcholine receptor subunit alpha-10 (Chrna10).